Consider the following 244-residue polypeptide: Small ribosomal subunit protein uS3 (244 aa).

A KH type-2 domain is found at 39 to 107 (IRELIKKESF…KLIINVEEIK (69 aa)). Positions 216 to 244 (LPVYKNKKNDKNKKRRNNNRKGKSQAAKN) are disordered. Over residues 220 to 238 (KNKKNDKNKKRRNNNRKGK) the composition is skewed to basic residues.

This sequence belongs to the universal ribosomal protein uS3 family. In terms of assembly, part of the 30S ribosomal subunit. Forms a tight complex with proteins S10 and S14.

In terms of biological role, binds the lower part of the 30S subunit head. Binds mRNA in the 70S ribosome, positioning it for translation. The protein is Small ribosomal subunit protein uS3 of Finegoldia magna (strain ATCC 29328 / DSM 20472 / WAL 2508) (Peptostreptococcus magnus).